The chain runs to 612 residues: Protein NorD (612 aa).

The tract at residues 220 to 246 (EGEGDLETPPSGQSRQRNGARRVDDSS) is disordered. In terms of domain architecture, VWFA spans 420–609 (DLACLLLADL…FPPAAAVQAT (190 aa)).

Functionally, component of the anaerobic respiratory chain that transforms nitrate to dinitrogen (denitrification). The protein is Protein NorD (norD) of Stutzerimonas stutzeri (Pseudomonas stutzeri).